Consider the following 557-residue polypeptide: Pre-mRNA-processing protein 45 (557 aa).

3 disordered regions span residues 1-32 (MALL…TSHA), 208-243 (EQDP…KVSA), and 316-444 (MAEK…MSSD). Over residues 16–25 (DFDDEEEDYV) the composition is skewed to acidic residues. Over residues 224–235 (RGPPSPPPPVLH) the composition is skewed to pro residues. Phosphoserine is present on residues Ser-228 and Ser-236. Over residues 316 to 327 (MAEKEKQEKEQR) the composition is skewed to basic and acidic residues. At Ser-376 the chain carries Phosphoserine. Over residues 386–430 (EAFRRRQELRRERRRQAEKDLRLSRMGAEKRAKLAEKDRPRDVAE) the composition is skewed to basic and acidic residues.

It belongs to the SNW family. In terms of assembly, homodimer. Interacts with cyp1 and the small 23 kDa subunit of the splicing factor U2AF (u2af23). Belongs to the 40S cdc5-associated complex (or cwf complex), a spliceosome sub-complex reminiscent of a late-stage spliceosome composed of the U2, U5 and U6 snRNAs and at least brr2, cdc5, cwf2/prp3, cwf3/syf1, cwf4/syf3, cwf5/ecm2, spp42/cwf6, cwf7/spf27, cwf8, cwf9, cwf10, cwf11, cwf12, prp45/cwf13, cwf14, cwf15, cwf16, cwf17, cwf18, cwf19, cwf20, cwf21, cwf22, cwf23, cwf24, cwf25, cwf26, cyp7/cwf27, cwf28, cwf29/ist3, lea1, msl1, prp5/cwf1, prp10, prp12/sap130, prp17, prp22, sap61, sap62, sap114, sap145, slu7, smb1, smd1, smd3, smf1, smg1 and syf2.

Its subcellular location is the nucleus. Involved in pre-mRNA splicing. The protein is Pre-mRNA-processing protein 45 (prp45) of Schizosaccharomyces pombe (strain 972 / ATCC 24843) (Fission yeast).